The primary structure comprises 342 residues: Trans-3-hydroxy-L-proline dehydratase (342 aa).

The Proton acceptor role is filled by S90. Residues 91 to 92 (GS), D252, and 257 to 258 (GT) each bind substrate.

It belongs to the proline racemase family.

It carries out the reaction trans-3-hydroxy-L-proline = 1-pyrroline-2-carboxylate + H2O. In terms of biological role, catalyzes the dehydration of trans-3-hydroxy-L-proline (t3LHyp) to Delta(1)-pyrroline-2-carboxylate (Pyr2C). Is likely involved in a degradation pathway that converts t3LHyp to L-proline. Displays neither proline racemase activity nor 4-hydroxyproline 2-epimerase activity. In Allorhizobium ampelinum (strain ATCC BAA-846 / DSM 112012 / S4) (Agrobacterium vitis (strain S4)), this protein is Trans-3-hydroxy-L-proline dehydratase.